A 453-amino-acid polypeptide reads, in one-letter code: tRNA-2-methylthio-N(6)-dimethylallyladenosine synthase (453 aa).

Positions 17-135 (GTFFIETWGC…FPEYLNRAKQ (119 aa)) constitute an MTTase N-terminal domain. [4Fe-4S] cluster contacts are provided by Cys26, Cys62, Cys96, Cys172, Cys176, and Cys179. The region spanning 158–388 (RKSSTKAFVT…VEVVNKSCEK (231 aa)) is the Radical SAM core domain. One can recognise a TRAM domain in the interval 391-453 (KKYQDRIVKV…LSFSLEGEEV (63 aa)).

This sequence belongs to the methylthiotransferase family. MiaB subfamily. Monomer. It depends on [4Fe-4S] cluster as a cofactor.

The protein resides in the cytoplasm. The enzyme catalyses N(6)-dimethylallyladenosine(37) in tRNA + (sulfur carrier)-SH + AH2 + 2 S-adenosyl-L-methionine = 2-methylsulfanyl-N(6)-dimethylallyladenosine(37) in tRNA + (sulfur carrier)-H + 5'-deoxyadenosine + L-methionine + A + S-adenosyl-L-homocysteine + 2 H(+). Functionally, catalyzes the methylthiolation of N6-(dimethylallyl)adenosine (i(6)A), leading to the formation of 2-methylthio-N6-(dimethylallyl)adenosine (ms(2)i(6)A) at position 37 in tRNAs that read codons beginning with uridine. This is tRNA-2-methylthio-N(6)-dimethylallyladenosine synthase from Clostridium tetani (strain Massachusetts / E88).